Reading from the N-terminus, the 205-residue chain is Small ribosomal subunit protein uS4 (205 aa).

Positions 18–49 (NIWGRPKSPVNKREYGPGQHGQRRKGKLSDFG) are disordered. One can recognise an S4 RNA-binding domain in the interval 94-157 (RRLDTVVYRA…KQLALVLEAN (64 aa)).

This sequence belongs to the universal ribosomal protein uS4 family. As to quaternary structure, part of the 30S ribosomal subunit. Contacts protein S5. The interaction surface between S4 and S5 is involved in control of translational fidelity.

In terms of biological role, one of the primary rRNA binding proteins, it binds directly to 16S rRNA where it nucleates assembly of the body of the 30S subunit. Functionally, with S5 and S12 plays an important role in translational accuracy. The sequence is that of Small ribosomal subunit protein uS4 from Nitrobacter winogradskyi (strain ATCC 25391 / DSM 10237 / CIP 104748 / NCIMB 11846 / Nb-255).